The sequence spans 318 residues: MRQFLDFEKSVAELENKIDELRKMSEPDGINLAEEIARLTDKSEKQLRAAYAKLSPWQKVQVARHAQRPHAADYIGTLIQDFTPLAGDRLFGEDKAVIGGIGRFQNQPVVVIGTERGSELESRLAHNFGMARPEGYRKAQRLMELAGRFGMPILTFIDTSGAWPGIDAEARGQAEAIARSIDTCLSAPVPVIATVIGEGGSGGAIALGAGDRVMMLEHAIYSVISPEACASILWRDPKQATSAAEALKLTAQDLLQLKLIDRIIPEPVGGAQRDPESTIRSVGDSIAAELPDLLSLSAPMLVAQRREKFLAMGRDSLS.

The CoA carboxyltransferase C-terminal domain maps to 39-292 (LTDKSEKQLR…GDSIAAELPD (254 aa)).

This sequence belongs to the AccA family. Acetyl-CoA carboxylase is a heterohexamer composed of biotin carboxyl carrier protein (AccB), biotin carboxylase (AccC) and two subunits each of ACCase subunit alpha (AccA) and ACCase subunit beta (AccD).

It is found in the cytoplasm. It catalyses the reaction N(6)-carboxybiotinyl-L-lysyl-[protein] + acetyl-CoA = N(6)-biotinyl-L-lysyl-[protein] + malonyl-CoA. It functions in the pathway lipid metabolism; malonyl-CoA biosynthesis; malonyl-CoA from acetyl-CoA: step 1/1. Its function is as follows. Component of the acetyl coenzyme A carboxylase (ACC) complex. First, biotin carboxylase catalyzes the carboxylation of biotin on its carrier protein (BCCP) and then the CO(2) group is transferred by the carboxyltransferase to acetyl-CoA to form malonyl-CoA. This chain is Acetyl-coenzyme A carboxylase carboxyl transferase subunit alpha, found in Gluconacetobacter diazotrophicus (strain ATCC 49037 / DSM 5601 / CCUG 37298 / CIP 103539 / LMG 7603 / PAl5).